The following is a 261-amino-acid chain: Thiazole synthase (261 aa).

Residue K102 is the Schiff-base intermediate with DXP of the active site. Residues G163, 189-190, and 211-212 contribute to the 1-deoxy-D-xylulose 5-phosphate site; these read AG and NT.

The protein belongs to the ThiG family. In terms of assembly, homotetramer. Forms heterodimers with either ThiH or ThiS.

The protein localises to the cytoplasm. The enzyme catalyses [ThiS sulfur-carrier protein]-C-terminal-Gly-aminoethanethioate + 2-iminoacetate + 1-deoxy-D-xylulose 5-phosphate = [ThiS sulfur-carrier protein]-C-terminal Gly-Gly + 2-[(2R,5Z)-2-carboxy-4-methylthiazol-5(2H)-ylidene]ethyl phosphate + 2 H2O + H(+). It participates in cofactor biosynthesis; thiamine diphosphate biosynthesis. In terms of biological role, catalyzes the rearrangement of 1-deoxy-D-xylulose 5-phosphate (DXP) to produce the thiazole phosphate moiety of thiamine. Sulfur is provided by the thiocarboxylate moiety of the carrier protein ThiS. In vitro, sulfur can be provided by H(2)S. The polypeptide is Thiazole synthase (Myxococcus xanthus (strain DK1622)).